A 394-amino-acid chain; its full sequence is Elongation factor Tu 2 (394 aa).

Residues 10 to 204 (KPHVNVGTIG…ALDSYIPEPE (195 aa)) form the tr-type G domain. Residues 19-26 (GHVDHGKT) are G1. Residue 19 to 26 (GHVDHGKT) participates in GTP binding. T26 is a binding site for Mg(2+). The G2 stretch occupies residues 60–64 (GITIN). The tract at residues 81–84 (DCPG) is G3. GTP is bound by residues 81 to 85 (DCPGH) and 136 to 139 (NKCD). The segment at 136 to 139 (NKCD) is G4. The segment at 174-176 (SAL) is G5.

Belongs to the TRAFAC class translation factor GTPase superfamily. Classic translation factor GTPase family. EF-Tu/EF-1A subfamily. In terms of assembly, monomer.

It localises to the cytoplasm. It catalyses the reaction GTP + H2O = GDP + phosphate + H(+). In terms of biological role, GTP hydrolase that promotes the GTP-dependent binding of aminoacyl-tRNA to the A-site of ribosomes during protein biosynthesis. The polypeptide is Elongation factor Tu 2 (Shewanella loihica (strain ATCC BAA-1088 / PV-4)).